The chain runs to 377 residues: tRNA-specific 2-thiouridylase MnmA (377 aa).

ATP-binding positions include 22-29 (GMSGGVDS) and M48. Residues 108 to 110 (NPD) are interaction with target base in tRNA. The Nucleophile role is filled by C113. C113 and C210 are oxidised to a cystine. Position 138 (G138) interacts with ATP. An interaction with tRNA region spans residues 160–162 (KDQ). The Cysteine persulfide intermediate role is filled by C210. The tract at residues 322–323 (RY) is interaction with tRNA.

This sequence belongs to the MnmA/TRMU family.

The protein resides in the cytoplasm. It catalyses the reaction S-sulfanyl-L-cysteinyl-[protein] + uridine(34) in tRNA + AH2 + ATP = 2-thiouridine(34) in tRNA + L-cysteinyl-[protein] + A + AMP + diphosphate + H(+). Catalyzes the 2-thiolation of uridine at the wobble position (U34) of tRNA, leading to the formation of s(2)U34. In Shewanella amazonensis (strain ATCC BAA-1098 / SB2B), this protein is tRNA-specific 2-thiouridylase MnmA.